The sequence spans 320 residues: tRNA dimethylallyltransferase (320 aa).

Position 17-24 (17-24 (GPTASGKT)) interacts with ATP. 19–24 (TASGKT) is a substrate binding site. Interaction with substrate tRNA regions lie at residues 42-45 (DSAL), 166-170 (QRIQR), and 249-254 (RCVGYR).

Belongs to the IPP transferase family. Monomer. Requires Mg(2+) as cofactor.

The catalysed reaction is adenosine(37) in tRNA + dimethylallyl diphosphate = N(6)-dimethylallyladenosine(37) in tRNA + diphosphate. Functionally, catalyzes the transfer of a dimethylallyl group onto the adenine at position 37 in tRNAs that read codons beginning with uridine, leading to the formation of N6-(dimethylallyl)adenosine (i(6)A). This chain is tRNA dimethylallyltransferase, found in Herminiimonas arsenicoxydans.